The following is a 214-amino-acid chain: MKNRLVIIVFMVVTMLCASLALPLEEKEDEKDEKRSLEVAGAVMEGANLGMSVLQTILQAIGDVSRKIAVGVDNESGRSWTAQNAYFRSGTSDVILPHTVPSGKALLYDGQKNRGPVATGVVGVITYTMGDGNTLAVMFSVPYDYNWYSNWWNVKIYHGKVRASQKMYEDLYYYRSPFKGDNGWHERNLGYGLKSKGFMNSSGAALLQIKVMKA.

The first 21 residues, 1–21 (MKNRLVIIVFMVVTMLCASLA), serve as a signal peptide directing secretion. Positions 22–35 (LPLEEKEDEKDEKR) are excised as a propeptide. Positions 38 to 47 (EVAGAVMEGA) are plays an important role in the hemolytic activity. The segment at 46 to 65 (GANLGMSVLQTILQAIGDVS) is N-terminal region. Ser-89, Val-122, Ser-140, Pro-142, Tyr-168, Tyr-172, and Tyr-173 together coordinate phosphocholine. Positions 140–155 (SVPYDYNWYSNWWNVK) are trp-rich region, which is important for the binding to lipid membrane. Positions 179 to 181 (KGD) match the Cell attachment site, crucial for protein stability motif.

The protein belongs to the actinoporin family. Sea anemone subfamily. As to quaternary structure, octamer or nonamer in membranes. Monomer in the soluble state.

Its subcellular location is the secreted. The protein resides in the nematocyst. It is found in the target cell membrane. Functionally, pore-forming protein that forms cation-selective hydrophilic pores in cell membranes and causes cytolysis. Pore formation is a multi-step process that involves specific recognition of membrane sphingomyelin (but neither cholesterol nor phosphatidylcholine) using aromatic rich region and adjacent phosphocholine (POC) binding site, firm binding to the membrane (mainly driven by hydrophobic interactions) accompanied by the transfer of the N-terminal region to the lipid-water interface and finally pore formation after oligomerization of monomers. This protein shows potent hemolytic activity (EC(50)=0.09 nM), as well as potent cytotoxic activity on nucleated cells (L1210 cells). The cytotoxic process starts with cellular swelling that is time and dose dependent and occurs up to a critical volume, probably due to influx of water via pores opened by this actinoporin. The second phase consists of the final loss of membrane integrity that leads to cytolysis. This Anthopleura nigrescens (Sea anemone) protein is Nigrelysin.